A 250-amino-acid chain; its full sequence is Pimeloyl-[acyl-carrier protein] methyl ester esterase (250 aa).

Substrate-binding positions include tryptophan 12, 71-72 (SL), and 138-142 (FVALQ). Serine 71 serves as the catalytic Nucleophile. Catalysis depends on residues aspartate 202 and histidine 230. Histidine 230 serves as a coordination point for substrate.

It belongs to the AB hydrolase superfamily. Carboxylesterase BioH family. In terms of assembly, monomer.

The protein resides in the cytoplasm. It catalyses the reaction 6-carboxyhexanoyl-[ACP] methyl ester + H2O = 6-carboxyhexanoyl-[ACP] + methanol + H(+). It participates in cofactor biosynthesis; biotin biosynthesis. The physiological role of BioH is to remove the methyl group introduced by BioC when the pimeloyl moiety is complete. It allows to synthesize pimeloyl-ACP via the fatty acid synthetic pathway through the hydrolysis of the ester bonds of pimeloyl-ACP esters. This chain is Pimeloyl-[acyl-carrier protein] methyl ester esterase, found in Aromatoleum aromaticum (strain DSM 19018 / LMG 30748 / EbN1) (Azoarcus sp. (strain EbN1)).